Reading from the N-terminus, the 347-residue chain is MGCCFTKRRKSEKAEGEEEQPKLYSWDQREKVDPKDYMFSGLKDETVGRLPGKVAGQQFVIQDCENCNIYIFDHSATITIDDCTNCVIFLGPVKGSVFFRNCRDCKCTLACQQFRVRDCRKLEVFLCCATQPIIESSTNIKFGCFQWYYPELAAQFKDAGLSIFNNIWSHVHDFTPVSGELNWSLLPENAVVQDYVPIPMTEEFKAVRISTEANRSIVPVSRGQRQKYSDESCLVVLFADDYTTANARKLIDEMVGKGFSLVQTKEMSMKTEDAQRVFQEKASDFLLLLNKGPVIALEFNGDDAVQECHLIVNGMFNGTKMFVSEKKETASGDVDSFYNFAEIQMGI.

Basic residues predominate over residues 1-11 (MGCCFTKRRKS). The interval 1–22 (MGCCFTKRRKSEKAEGEEEQPK) is disordered. Residue G2 is the site of N-myristoyl glycine attachment. Residue C3 is the site of S-palmitoyl cysteine attachment. One can recognise a C-CAP/cofactor C-like domain in the interval 21 to 176 (PKLYSWDQRE…IWSHVHDFTP (156 aa)). GTP contacts are provided by residues 95–96 (GS) and 112–115 (QQFR).

Belongs to the TBCC family. As to quaternary structure, found in a complex with ARL3, RP2 and UNC119 (or UNC119B); RP2 induces hydrolysis of GTP ARL3 in the complex, leading to the release of UNC119 (or UNC119B). Interacts with ARL3; interaction is direct and stimulated with the activated GTP-bound form of ARL3. In terms of processing, myristoylated on Gly-2; which may be required for membrane targeting. Palmitoylated on Cys-3; which may be required for plasma membrane targeting. In terms of tissue distribution, retina (at protein level).

It is found in the cell membrane. The protein resides in the cell projection. The protein localises to the cilium. In terms of biological role, acts as a GTPase-activating protein (GAP) involved in trafficking between the Golgi and the ciliary membrane. Involved in localization of proteins, such as NPHP3, to the cilium membrane by inducing hydrolysis of GTP ARL3, leading to the release of UNC119 (or UNC119B). Acts as a GTPase-activating protein (GAP) for tubulin in concert with tubulin-specific chaperone C, but does not enhance tubulin heterodimerization. Acts as a guanine nucleotide dissociation inhibitor towards ADP-ribosylation factor-like proteins. The chain is Protein XRP2 (Rp2) from Mus musculus (Mouse).